Reading from the N-terminus, the 74-residue chain is Exodeoxyribonuclease 7 small subunit (74 aa).

Belongs to the XseB family. Heterooligomer composed of large and small subunits.

The protein localises to the cytoplasm. The catalysed reaction is Exonucleolytic cleavage in either 5'- to 3'- or 3'- to 5'-direction to yield nucleoside 5'-phosphates.. Bidirectionally degrades single-stranded DNA into large acid-insoluble oligonucleotides, which are then degraded further into small acid-soluble oligonucleotides. The chain is Exodeoxyribonuclease 7 small subunit from Bdellovibrio bacteriovorus (strain ATCC 15356 / DSM 50701 / NCIMB 9529 / HD100).